A 238-amino-acid chain; its full sequence is Snake venom metalloproteinase HF-1 (238 aa).

A Peptidase M12B domain is found at arginine 17–proline 221. Aspartate 106 lines the Ca(2+) pocket. Intrachain disulfides connect cysteine 130–cysteine 216 and cysteine 174–cysteine 181. Residue histidine 158 participates in Zn(2+) binding. Glutamate 159 is an active-site residue. Zn(2+) contacts are provided by histidine 162 and histidine 168. The Ca(2+) site is built by cysteine 216 and asparagine 219.

In terms of assembly, monomer. Requires Zn(2+) as cofactor. Expressed by the venom gland.

The protein resides in the secreted. Inhibited by EDTA and EGTA. Inhibited by serum and antihemorrhagic factors Da2-I and Da2-II from D.albiventris. Not inhibited by PMSF or SBT-I. In terms of biological role, snake venom zinc metalloprotease that is weakly hemorrhagic and has Aalpha, Bbeta fibrinogenolytic activities. Cleaves the Aalpha chain of fibrinogen first, followed by the Bbeta chain and shows no effect on the gamma chain. Has caseinolytic activity. Induces dose-dependent edema. This Bothrops marajoensis (Marajo lancehead) protein is Snake venom metalloproteinase HF-1.